A 344-amino-acid chain; its full sequence is Dihydroorotase (344 aa).

Zn(2+) is bound by residues histidine 14 and histidine 16. Residues 16 to 18 (HLR) and asparagine 42 each bind substrate. Zn(2+) contacts are provided by lysine 100, histidine 137, and histidine 175. Lysine 100 is modified (N6-carboxylysine). Position 137 (histidine 137) interacts with substrate. Substrate is bound at residue leucine 220. Aspartate 248 contacts Zn(2+). The active site involves aspartate 248. Histidine 252 and alanine 264 together coordinate substrate.

The protein belongs to the metallo-dependent hydrolases superfamily. DHOase family. Class II DHOase subfamily. In terms of assembly, homodimer. Zn(2+) serves as cofactor.

It carries out the reaction (S)-dihydroorotate + H2O = N-carbamoyl-L-aspartate + H(+). Its pathway is pyrimidine metabolism; UMP biosynthesis via de novo pathway; (S)-dihydroorotate from bicarbonate: step 3/3. In terms of biological role, catalyzes the reversible cyclization of carbamoyl aspartate to dihydroorotate. The sequence is that of Dihydroorotase from Cupriavidus taiwanensis (strain DSM 17343 / BCRC 17206 / CCUG 44338 / CIP 107171 / LMG 19424 / R1) (Ralstonia taiwanensis (strain LMG 19424)).